We begin with the raw amino-acid sequence, 880 residues long: Leucine--tRNA ligase (880 aa).

Positions 46 to 56 match the 'HIGH' region motif; it reads PYPSGALHMGH. The 'KMSKS' region signature appears at 638-642; it reads KMSKS. Lys-641 lines the ATP pocket.

It belongs to the class-I aminoacyl-tRNA synthetase family.

Its subcellular location is the cytoplasm. It carries out the reaction tRNA(Leu) + L-leucine + ATP = L-leucyl-tRNA(Leu) + AMP + diphosphate. The protein is Leucine--tRNA ligase of Xanthomonas oryzae pv. oryzae (strain KACC10331 / KXO85).